A 283-amino-acid polypeptide reads, in one-letter code: MDLWPGAWMLLLLLFLLLLFLLPTLWFCSPSAKYFFKMAFYNGWILFLAVLAIPVCAVRGRNVENMKILRLMLLHIKYLYGIRVEVRGAHHFPPSQPYVVVSNHQSSLDLLGMMEVLPGRCVPIAKRELLWAGSAGLACWLAGVIFIDRKRTGDAISVMSEVAQTLLTQDVRVWVFPEGTRNHNGSMLPFKRGAFHLAVQAQVPIVPIVMSSYQDFYCKKERRFTSGQCQVRVLPPVPTEGLTPDDVPALADRVRHSMLTVFREISTDGRGGGDYLKKPGGGG.

Residues 1–26 (MDLWPGAWMLLLLLFLLLLFLLPTLW) form the signal peptide. Residues 27 to 37 (FCSPSAKYFFK) are Lumenal-facing. The helical transmembrane segment at 38 to 58 (MAFYNGWILFLAVLAIPVCAV) threads the bilayer. At 59-127 (RGRNVENMKI…PGRCVPIAKR (69 aa)) the chain is on the cytoplasmic side. The short motif at 104-109 (HQSSLD) is the HXXXXD motif element. Residues 128–148 (ELLWAGSAGLACWLAGVIFID) traverse the membrane as a helical segment. The Lumenal portion of the chain corresponds to 149-283 (RKRTGDAISV…DYLKKPGGGG (135 aa)). An EGTR motif motif is present at residues 178 to 181 (EGTR).

The protein belongs to the 1-acyl-sn-glycerol-3-phosphate acyltransferase family. As to expression, widely expressed. Expressed in adipose tissue and at high levels in testis and pancreas. Expressed at lower levels in tissues such as heart, brain, placenta, kidney, lung, spleen, thymus, prostate, ovary, intestine, colon, leukocyte and liver.

It localises to the endoplasmic reticulum membrane. The catalysed reaction is a 1-acyl-sn-glycero-3-phosphate + an acyl-CoA = a 1,2-diacyl-sn-glycero-3-phosphate + CoA. The enzyme catalyses 1-(9Z-octadecenoyl)-sn-glycero-3-phosphate + (9Z)-octadecenoyl-CoA = 1,2-di-(9Z-octadecenoyl)-sn-glycero-3-phosphate + CoA. It carries out the reaction 1-(9Z-octadecenoyl)-sn-glycero-3-phosphate + hexadecanoyl-CoA = 1-(9Z)-octadecenoyl-2-hexadecanoyl-sn-glycero-3-phosphate + CoA. It catalyses the reaction heptadecanoyl-CoA + 1-(9Z-octadecenoyl)-sn-glycero-3-phosphate = 1-(9Z)-octadecenoyl-2-heptadecanoyl-sn-glycero-3-phosphate + CoA. The catalysed reaction is 1-(9Z-octadecenoyl)-sn-glycero-3-phosphate + octadecanoyl-CoA = 1-(9Z-octadecenoyl)-2-octadecanoyl-sn-glycero-3-phosphate + CoA. The enzyme catalyses 1-(9Z-octadecenoyl)-sn-glycero-3-phosphate + (9Z,12Z)-octadecadienoyl-CoA = 1-(9Z)-octadecenoyl-2-(9Z,12Z)-octadecadienoyl-sn-glycero-3-phosphate + CoA. It carries out the reaction 1-(9Z-octadecenoyl)-sn-glycero-3-phosphate + tetradecanoyl-CoA = 1-(9Z)-octadecenoyl-2-tetradecanoyl-sn-glycero-3-phosphate + CoA. It catalyses the reaction pentadecanoyl-CoA + 1-(9Z-octadecenoyl)-sn-glycero-3-phosphate = 1-(9Z)-octadecenoyl-2-pentadecanoyl-sn-glycero-3-phosphate + CoA. The catalysed reaction is 1-hexadecanoyl-sn-glycero-3-phosphate + (9Z)-octadecenoyl-CoA = 1-hexadecanoyl-2-(9Z-octadecenoyl)-sn-glycero-3-phosphate + CoA. The enzyme catalyses 1-(9Z,12Z,15Z)-octadecatrienoyl-sn-glycero-3-phosphate + (9Z)-octadecenoyl-CoA = 1-(9Z,12Z,15Z)-octadecatrienoyl-2-(9Z)-octadecenoyl-sn-glycero-3-phosphate + CoA. It carries out the reaction 1-(6Z,9Z,12Z-octadecatrienoyl)-sn-glycero-3-phosphate + (9Z)-octadecenoyl-CoA = (6Z,9Z,12Z)-octadecatrienoyl-2-(9Z)-octadecenoyl-sn-glycero-3-phosphate + CoA. It catalyses the reaction 1-eicosanoyl-sn-glycero-3-phosphate + (9Z)-octadecenoyl-CoA = 1-eicosanoyl-2-(9Z)-octadecenoyl-sn-glycero-3-phosphate + CoA. The catalysed reaction is 1-tetradecanoyl-sn-glycerol 3-phosphate + (9Z)-octadecenoyl-CoA = 1-tetradecanoyl-2-(9Z)-octadecenoyl-sn-glycero-3-phosphate + CoA. The enzyme catalyses 1-(9Z-octadecenoyl)-sn-glycero-3-phosphate + (5Z,8Z,11Z,14Z)-eicosatetraenoyl-CoA = 1-(9Z)-octadecenoyl-2-(5Z,8Z,11Z,14Z)-eicosatetraenoyl-sn-glycero-3-phosphate + CoA. It carries out the reaction 1-(9Z-octadecenoyl)-sn-glycero-3-phosphate + dodecanoyl-CoA = 1-(9Z)-octadecenoyl-2-dodecanoyl-sn-glycero-3-phosphate + CoA. It catalyses the reaction (6Z)-octadecenoyl-CoA + 1-(9Z-octadecenoyl)-sn-glycero-3-phosphate = 1-(9Z)-octadecenoyl-2-(6Z)-octadecenoyl-sn-glycero-3-phosphate + CoA. The catalysed reaction is (11Z)-octadecenoyl-CoA + 1-(9Z-octadecenoyl)-sn-glycero-3-phosphate = 1-(9Z)-octadecenoyl-2-(11Z)-octadecenoyl-sn-glycero-3-phosphate + CoA. The enzyme catalyses (9Z)-hexadecenoyl-CoA + 1-(9Z-octadecenoyl)-sn-glycero-3-phosphate = 1-(9Z-octadecenoyl)-2-(9Z-hexadecenoyl)-sn-glycero-3-phosphate + CoA. The protein operates within phospholipid metabolism; CDP-diacylglycerol biosynthesis; CDP-diacylglycerol from sn-glycerol 3-phosphate: step 2/3. In terms of biological role, converts 1-acyl-sn-glycerol-3-phosphate (lysophosphatidic acid or LPA) into 1,2-diacyl-sn-glycerol-3-phosphate (phosphatidic acid or PA) by incorporating an acyl moiety at the sn-2 position of the glycerol backbone. In Homo sapiens (Human), this protein is 1-acyl-sn-glycerol-3-phosphate acyltransferase alpha (AGPAT1).